A 318-amino-acid chain; its full sequence is uncharacterized protein (318 aa).

This is an uncharacterized protein from Autographa californica nuclear polyhedrosis virus (AcMNPV).